The sequence spans 264 residues: uncharacterized protein (264 aa).

Residues 7–27 (LTLGICLVLLIILIVGYVIMT) form a helical membrane-spanning segment.

It belongs to the staphylococcal tandem lipoprotein family.

It is found in the cell membrane. This is an uncharacterized protein from Staphylococcus aureus (strain MRSA252).